The following is an 858-amino-acid chain: Respiratory burst oxidase homolog protein D (858 aa).

The span at 1 to 13 (MQNPEDHHSDREL) shows a compositional bias: basic and acidic residues. The disordered stretch occupies residues 1–27 (MQNPEDHHSDRELSSPSNTTKSNDDKN). The Cytoplasmic segment spans residues 1-318 (MQNPEDHHSD…KYFLLDNWRR (318 aa)). EF-hand-like stretches follow at residues 134 to 144 (TATSDSLLPRA) and 171 to 182 (RNITSGCISKEQ). EF-hand domains are found at residues 194 to 229 (SFDS…SASA) and 238 to 273 (QAAE…APIQ). 5 residues coordinate Ca(2+): D207, D209, D211, R213, and E218. The chain crosses the membrane as a helical span at residues 319–339 (VWVLLLWIGVMAGLFAYKYVQ). Over 340 to 351 (YKNKAAFNVMGH) the chain is Extracellular. The helical transmembrane segment at 352–372 (CVCVAKGAAEVLKLNMALILL) threads the bilayer. The Ferric oxidoreductase domain maps to 357 to 514 (KGAAEVLKLN…LFVIVYSLLI (158 aa)). The Cytoplasmic segment spans residues 373–397 (PVCRNTITWLRNKTKLGGAVPFDDN). A helical membrane pass occupies residues 398 to 418 (INFHKVVAGAIAVGVGIHVLA). The Extracellular portion of the chain corresponds to 419-454 (HMTCDFPRLLNASPEKYKPMEPYFGDQPRNYWHFVK). The helical transmembrane segment at 455–475 (GVEGVSGIIMVVLMSIAFTLA) threads the bilayer. At 476 to 497 (SQRFRRNKIRLPRPLNKLTGFN) the chain is on the cytoplasmic side. A helical transmembrane segment spans residues 498–518 (AFWYSHHLFVIVYSLLIVHGI). At 519 to 675 (ELYLTKEWYK…APAQDYKEYE (157 aa)) the chain is on the extracellular side. Residues 548-670 (LRAFRSSVKD…DGPYGAPAQD (123 aa)) enclose the FAD-binding FR-type domain. Residues 676 to 696 (VLLLVGLGIGATPMISIVKDI) form a helical membrane-spanning segment. Residues 697–858 (VNNMKEEKYD…TKFDFHKENF (162 aa)) are Cytoplasmic-facing.

This sequence belongs to the RBOH (TC 5.B.1.3) family. Monomer and homodimer. In terms of processing, phosphorylated by CPK. In terms of tissue distribution, expressed in leaves.

The protein resides in the membrane. Calcium-dependent NADPH oxidase that generates superoxide. May be responsible for the oxidative burst in response to pathogen attack in the leaves. This Solanum tuberosum (Potato) protein is Respiratory burst oxidase homolog protein D (RBOHD).